We begin with the raw amino-acid sequence, 431 residues long: Na(+)-translocating NADH-quinone reductase subunit F (431 aa).

Residues 10-30 traverse the membrane as a helical segment; sequence ISIASLVFCVIGLILSGVILI. Residues 41–133 form the 2Fe-2S ferredoxin-type domain; the sequence is CKLKINNDDS…DMNLEIEERY (93 aa). Residues Cys-76, Cys-82, Cys-85, and Cys-117 each coordinate [2Fe-2S] cluster. The FAD-binding FR-type domain occupies 136 to 286; it reads ASSWEGTVVS…SGPYGESFMK (151 aa).

The protein belongs to the NqrF family. Composed of six subunits; NqrA, NqrB, NqrC, NqrD, NqrE and NqrF. Requires [2Fe-2S] cluster as cofactor. FAD is required as a cofactor.

The protein localises to the cell inner membrane. The catalysed reaction is a ubiquinone + n Na(+)(in) + NADH + H(+) = a ubiquinol + n Na(+)(out) + NAD(+). Functionally, NQR complex catalyzes the reduction of ubiquinone-1 to ubiquinol by two successive reactions, coupled with the transport of Na(+) ions from the cytoplasm to the periplasm. The first step is catalyzed by NqrF, which accepts electrons from NADH and reduces ubiquinone-1 to ubisemiquinone by a one-electron transfer pathway. In Chlamydia felis (strain Fe/C-56) (Chlamydophila felis), this protein is Na(+)-translocating NADH-quinone reductase subunit F.